A 371-amino-acid chain; its full sequence is Anhydro-N-acetylmuramic acid kinase (371 aa).

An ATP-binding site is contributed by 9–16; that stretch reads GTSMDGID.

The protein belongs to the anhydro-N-acetylmuramic acid kinase family.

It catalyses the reaction 1,6-anhydro-N-acetyl-beta-muramate + ATP + H2O = N-acetyl-D-muramate 6-phosphate + ADP + H(+). Its pathway is amino-sugar metabolism; 1,6-anhydro-N-acetylmuramate degradation. It functions in the pathway cell wall biogenesis; peptidoglycan recycling. Catalyzes the specific phosphorylation of 1,6-anhydro-N-acetylmuramic acid (anhMurNAc) with the simultaneous cleavage of the 1,6-anhydro ring, generating MurNAc-6-P. Is required for the utilization of anhMurNAc either imported from the medium or derived from its own cell wall murein, and thus plays a role in cell wall recycling. The polypeptide is Anhydro-N-acetylmuramic acid kinase (Azorhizobium caulinodans (strain ATCC 43989 / DSM 5975 / JCM 20966 / LMG 6465 / NBRC 14845 / NCIMB 13405 / ORS 571)).